Here is a 462-residue protein sequence, read N- to C-terminus: ATP synthase subunit beta 1 (462 aa).

152–159 (GGAGVGKT) serves as a coordination point for ATP.

The protein belongs to the ATPase alpha/beta chains family. F-type ATPases have 2 components, CF(1) - the catalytic core - and CF(0) - the membrane proton channel. CF(1) has five subunits: alpha(3), beta(3), gamma(1), delta(1), epsilon(1). CF(0) has four main subunits: a(1), b(1), b'(1) and c(9-12).

It is found in the cell inner membrane. It catalyses the reaction ATP + H2O + 4 H(+)(in) = ADP + phosphate + 5 H(+)(out). Functionally, produces ATP from ADP in the presence of a proton gradient across the membrane. The catalytic sites are hosted primarily by the beta subunits. The chain is ATP synthase subunit beta 1 from Dinoroseobacter shibae (strain DSM 16493 / NCIMB 14021 / DFL 12).